The chain runs to 322 residues: Transcriptional activator protein Pur-alpha (322 aa).

The tract at residues 1-55 is disordered; that stretch reads MADRDSGSEQGGAALGSGGSLGHPGSGSGSGGGGGGGGGGGGSGGGGGGAPGGLQ. Alanine 2 bears the N-acetylalanine mark. Gly residues predominate over residues 9-52; it reads EQGGAALGSGGSLGHPGSGSGSGGGGGGGGGGGGSGGGGGGAPG. The PUR repeat I repeat unit spans residues 60 to 125; the sequence is ELASKRVDIQ…DFIEHYAQLG (66 aa). The PUR repeat II repeat unit spans residues 142-213; sequence ALKSEFLVRE…KLIDDYGVEE (72 aa). Serine 182 carries the phosphoserine modification. Residues 215–281 form a PUR repeat III repeat; it reads PAELPEGTSL…CKYSEEMKKI (67 aa). The span at 295–314 shows a compositional bias: low complexity; the sequence is LHQQQQQQQEETAAATLLLQ. The segment at 295–322 is disordered; the sequence is LHQQQQQQQEETAAATLLLQGEEEGEED.

It belongs to the PUR DNA-binding protein family. Homodimer, heterodimer with PURB and heterotrimer with PURB and YBX1/Y-box protein 1. Interacts with FMR1; this interaction occurs in association with polyribosome.

The protein resides in the nucleus. In terms of biological role, this is a probable transcription activator that specifically binds the purine-rich single strand of the PUR element located upstream of the MYC gene. May play a role in the initiation of DNA replication and in recombination. In Homo sapiens (Human), this protein is Transcriptional activator protein Pur-alpha (PURA).